The sequence spans 303 residues: Glutathione transport system permease protein GsiD (303 aa).

7 consecutive transmembrane segments (helical) span residues 37 to 57 (QHVA…AIFA), 105 to 125 (LAAG…LGLL), 144 to 164 (LFAF…GSGI), 165 to 185 (ANVI…LVRG), 208 to 228 (TILF…FFTM), 230 to 250 (IGTS…AQPP), and 266 to 286 (VIAP…VLAF). In terms of domain architecture, ABC transmembrane type-1 spans 101 to 290 (AQISLAAGVF…LTVLAFNLLG (190 aa)).

It belongs to the binding-protein-dependent transport system permease family. In terms of assembly, the complex is composed of two ATP-binding proteins (GsiA), two transmembrane proteins (GsiC and GsiD) and a solute-binding protein (GsiB).

Its subcellular location is the cell inner membrane. Part of the ABC transporter complex GsiABCD involved in glutathione import. Probably responsible for the translocation of the substrate across the membrane. The polypeptide is Glutathione transport system permease protein GsiD (Salmonella paratyphi A (strain ATCC 9150 / SARB42)).